We begin with the raw amino-acid sequence, 367 residues long: Dual-specificity RNA methyltransferase RlmN (367 aa).

The active-site Proton acceptor is E93. The 235-residue stretch at 99 to 333 (EEDRATLCVS…VIVRKTRGDD (235 aa)) folds into the Radical SAM core domain. A disulfide bridge links C106 with C338. 3 residues coordinate [4Fe-4S] cluster: C113, C117, and C120. Residues 162-163 (GE), S194, 216-218 (SLH), and N295 contribute to the S-adenosyl-L-methionine site. Residue C338 is the S-methylcysteine intermediate of the active site.

The protein belongs to the radical SAM superfamily. RlmN family. [4Fe-4S] cluster serves as cofactor.

The protein localises to the cytoplasm. The catalysed reaction is adenosine(2503) in 23S rRNA + 2 reduced [2Fe-2S]-[ferredoxin] + 2 S-adenosyl-L-methionine = 2-methyladenosine(2503) in 23S rRNA + 5'-deoxyadenosine + L-methionine + 2 oxidized [2Fe-2S]-[ferredoxin] + S-adenosyl-L-homocysteine. The enzyme catalyses adenosine(37) in tRNA + 2 reduced [2Fe-2S]-[ferredoxin] + 2 S-adenosyl-L-methionine = 2-methyladenosine(37) in tRNA + 5'-deoxyadenosine + L-methionine + 2 oxidized [2Fe-2S]-[ferredoxin] + S-adenosyl-L-homocysteine. Functionally, specifically methylates position 2 of adenine 2503 in 23S rRNA and position 2 of adenine 37 in tRNAs. m2A2503 modification seems to play a crucial role in the proofreading step occurring at the peptidyl transferase center and thus would serve to optimize ribosomal fidelity. This Aeromonas hydrophila subsp. hydrophila (strain ATCC 7966 / DSM 30187 / BCRC 13018 / CCUG 14551 / JCM 1027 / KCTC 2358 / NCIMB 9240 / NCTC 8049) protein is Dual-specificity RNA methyltransferase RlmN.